A 191-amino-acid chain; its full sequence is Small ribosomal subunit protein uS5 (191 aa).

A disordered region spans residues 1–20; that stretch reads MAGERERGGRERSRDREERD. Positions 23–86 constitute an S5 DRBM domain; sequence FVDKLVHINR…ESAKRNLTRV (64 aa).

Belongs to the universal ribosomal protein uS5 family. In terms of assembly, part of the 30S ribosomal subunit. Contacts proteins S4 and S8.

With S4 and S12 plays an important role in translational accuracy. Its function is as follows. Located at the back of the 30S subunit body where it stabilizes the conformation of the head with respect to the body. In Nitrobacter winogradskyi (strain ATCC 25391 / DSM 10237 / CIP 104748 / NCIMB 11846 / Nb-255), this protein is Small ribosomal subunit protein uS5.